Consider the following 457-residue polypeptide: Probable xyloglucan 6-xylosyltransferase 3 (457 aa).

A disordered region spans residues 1-40; sequence MGKEDGFRTQKRVSTASSAAAGVLPTTMASGGVRRPPPRG. The Cytoplasmic segment spans residues 1 to 51; sequence MGKEDGFRTQKRVSTASSAAAGVLPTTMASGGVRRPPPRGRQIQKTFNNVK. A helical; Signal-anchor for type II membrane protein membrane pass occupies residues 52-71; sequence MTILCGFVTILVLRGTIGIN. Residues 72–457 are Lumenal-facing; the sequence is FGTSDADVVN…TTPLKIEARS (386 aa). 2 N-linked (GlcNAc...) asparagine glycosylation sites follow: asparagine 115 and asparagine 431.

The protein belongs to the glycosyltransferase 34 family.

Its subcellular location is the golgi apparatus membrane. It carries out the reaction Transfers an alpha-D-xylosyl residue from UDP-D-xylose to a glucose residue in xyloglucan, forming an alpha-(1-&gt;6)-D-xylosyl-D-glucose linkage.. Functionally, probable xyloglucan xylosyltransferase involved in the biosynthesis of xyloglucan. This is Probable xyloglucan 6-xylosyltransferase 3 from Arabidopsis thaliana (Mouse-ear cress).